Consider the following 664-residue polypeptide: Exoribonuclease 2 (664 aa).

One can recognise an RNB domain in the interval 193-521 (RIDMTHIPFV…INHRMLKALI (329 aa)). The S1 motif domain occupies 568–650 (QTLFTGEIFD…ENRSLVAKPT (83 aa)).

This sequence belongs to the RNR ribonuclease family. RNase II subfamily.

It localises to the cytoplasm. It carries out the reaction Exonucleolytic cleavage in the 3'- to 5'-direction to yield nucleoside 5'-phosphates.. Functionally, involved in mRNA degradation. Hydrolyzes single-stranded polyribonucleotides processively in the 3' to 5' direction. This chain is Exoribonuclease 2, found in Vibrio vulnificus (strain CMCP6).